We begin with the raw amino-acid sequence, 239 residues long: Ribonuclease PH (239 aa).

Residues R86 and 124 to 126 contribute to the phosphate site; that span reads GTR.

This sequence belongs to the RNase PH family. As to quaternary structure, homohexameric ring arranged as a trimer of dimers.

The catalysed reaction is tRNA(n+1) + phosphate = tRNA(n) + a ribonucleoside 5'-diphosphate. Its function is as follows. Phosphorolytic 3'-5' exoribonuclease that plays an important role in tRNA 3'-end maturation. Removes nucleotide residues following the 3'-CCA terminus of tRNAs; can also add nucleotides to the ends of RNA molecules by using nucleoside diphosphates as substrates, but this may not be physiologically important. Probably plays a role in initiation of 16S rRNA degradation (leading to ribosome degradation) during starvation. This Anaeromyxobacter dehalogenans (strain 2CP-1 / ATCC BAA-258) protein is Ribonuclease PH.